We begin with the raw amino-acid sequence, 384 residues long: Galactokinase (384 aa).

Position 35–38 (35–38 (EHTD)) interacts with substrate. Residues S69 and 125–131 (GAGLSSS) each bind ATP. Mg(2+) is bound by residues S131 and E163. D175 serves as the catalytic Proton acceptor. Position 224 (Y224) interacts with substrate.

It belongs to the GHMP kinase family. GalK subfamily.

The protein localises to the cytoplasm. It catalyses the reaction alpha-D-galactose + ATP = alpha-D-galactose 1-phosphate + ADP + H(+). Its pathway is carbohydrate metabolism; galactose metabolism. Functionally, catalyzes the transfer of the gamma-phosphate of ATP to D-galactose to form alpha-D-galactose-1-phosphate (Gal-1-P). This chain is Galactokinase, found in Aliivibrio fischeri (strain ATCC 700601 / ES114) (Vibrio fischeri).